Reading from the N-terminus, the 161-residue chain is Large ribosomal subunit protein uL16 (161 aa).

The protein belongs to the universal ribosomal protein uL16 family.

The sequence is that of Large ribosomal subunit protein uL16 from Methanosphaera stadtmanae (strain ATCC 43021 / DSM 3091 / JCM 11832 / MCB-3).